The sequence spans 310 residues: Coproporphyrin III ferrochelatase (310 aa).

His184 and Glu265 together coordinate Fe(2+).

This sequence belongs to the ferrochelatase family.

It is found in the cytoplasm. The enzyme catalyses Fe-coproporphyrin III + 2 H(+) = coproporphyrin III + Fe(2+). It functions in the pathway porphyrin-containing compound metabolism; protoheme biosynthesis. Involved in coproporphyrin-dependent heme b biosynthesis. Catalyzes the insertion of ferrous iron into coproporphyrin III to form Fe-coproporphyrin III. This chain is Coproporphyrin III ferrochelatase, found in Limosilactobacillus reuteri (strain DSM 20016) (Lactobacillus reuteri).